Consider the following 123-residue polypeptide: MHYCNKDIGSFGETIAVDYIKNCGYIILERNFRCKLGEIDIIAKDKNFIVFIEVKTRYSYIYGSPSEAITFRKQNKIYKTAQLYIIKKAIHNKFYFRFDVIEVILNTLNSNYSVKLIKNAFQI.

Belongs to the UPF0102 family.

This Clostridium botulinum (strain Okra / Type B1) protein is UPF0102 protein CLD_2200.